Here is a 345-residue protein sequence, read N- to C-terminus: Holliday junction branch migration complex subunit RuvB (345 aa).

Residues 1-186 (MSTDPDEREV…FGFTAHMDFY (186 aa)) are large ATPase domain (RuvB-L). ATP-binding positions include leucine 25, arginine 26, glycine 67, lysine 70, threonine 71, serine 72, 133–135 (EDF), arginine 176, tyrosine 186, and arginine 223. Threonine 71 is a binding site for Mg(2+). The small ATPAse domain (RuvB-S) stretch occupies residues 187–257 (EPAELERVLV…VAKAALAVYD (71 aa)). Residues 260–345 (ELGLDRLDRA…AGANQPGLFE (86 aa)) are head domain (RuvB-H). DNA contacts are provided by arginine 315 and arginine 320.

The protein belongs to the RuvB family. In terms of assembly, homohexamer. Forms an RuvA(8)-RuvB(12)-Holliday junction (HJ) complex. HJ DNA is sandwiched between 2 RuvA tetramers; dsDNA enters through RuvA and exits via RuvB. An RuvB hexamer assembles on each DNA strand where it exits the tetramer. Each RuvB hexamer is contacted by two RuvA subunits (via domain III) on 2 adjacent RuvB subunits; this complex drives branch migration. In the full resolvosome a probable DNA-RuvA(4)-RuvB(12)-RuvC(2) complex forms which resolves the HJ.

The protein resides in the cytoplasm. It carries out the reaction ATP + H2O = ADP + phosphate + H(+). In terms of biological role, the RuvA-RuvB-RuvC complex processes Holliday junction (HJ) DNA during genetic recombination and DNA repair, while the RuvA-RuvB complex plays an important role in the rescue of blocked DNA replication forks via replication fork reversal (RFR). RuvA specifically binds to HJ cruciform DNA, conferring on it an open structure. The RuvB hexamer acts as an ATP-dependent pump, pulling dsDNA into and through the RuvAB complex. RuvB forms 2 homohexamers on either side of HJ DNA bound by 1 or 2 RuvA tetramers; 4 subunits per hexamer contact DNA at a time. Coordinated motions by a converter formed by DNA-disengaged RuvB subunits stimulates ATP hydrolysis and nucleotide exchange. Immobilization of the converter enables RuvB to convert the ATP-contained energy into a lever motion, pulling 2 nucleotides of DNA out of the RuvA tetramer per ATP hydrolyzed, thus driving DNA branch migration. The RuvB motors rotate together with the DNA substrate, which together with the progressing nucleotide cycle form the mechanistic basis for DNA recombination by continuous HJ branch migration. Branch migration allows RuvC to scan DNA until it finds its consensus sequence, where it cleaves and resolves cruciform DNA. The sequence is that of Holliday junction branch migration complex subunit RuvB from Mycobacterium marinum (strain ATCC BAA-535 / M).